A 341-amino-acid polypeptide reads, in one-letter code: Major capsid protein (341 aa).

Residues 109-129 (RRIILQNMKDEELAIAQVEEK) adopt a coiled-coil conformation.

This sequence belongs to the lambda phage major capsid protein family. As to quaternary structure, homomultimer.

The protein resides in the virion. The protein localises to the host cytoplasm. Functionally, assembles to form an icosahedral capsid with a T=7 symmetry. The icosahedral capsid is about 60 nm in diameter and composed of 415 major capsid proteins. The assembly is primed by the interaction between capsid assembly protease and portal dodecamer, and major capsid proteins assemble cooperatively to form the procapsid with the help of capsid scaffolding protein. Major capsid protein forms hexons and pentons of the icosahedron. Viral genomic DNA is packaged into the procapsid through the portal vertex. The packaging triggers a dramatic reconfiguration of the capsid shell. This is Major capsid protein from Escherichia coli (Bacteriophage N15).